A 404-amino-acid polypeptide reads, in one-letter code: Probable tRNA sulfurtransferase (404 aa).

Positions 60-165 (RSVIEALKPV…DEAAYLSHED (106 aa)) constitute a THUMP domain. Residues 183 to 184 (ML), 208 to 209 (HF), R265, G287, and Q296 contribute to the ATP site.

It belongs to the ThiI family.

It is found in the cytoplasm. It catalyses the reaction [ThiI sulfur-carrier protein]-S-sulfanyl-L-cysteine + a uridine in tRNA + 2 reduced [2Fe-2S]-[ferredoxin] + ATP + H(+) = [ThiI sulfur-carrier protein]-L-cysteine + a 4-thiouridine in tRNA + 2 oxidized [2Fe-2S]-[ferredoxin] + AMP + diphosphate. The enzyme catalyses [ThiS sulfur-carrier protein]-C-terminal Gly-Gly-AMP + S-sulfanyl-L-cysteinyl-[cysteine desulfurase] + AH2 = [ThiS sulfur-carrier protein]-C-terminal-Gly-aminoethanethioate + L-cysteinyl-[cysteine desulfurase] + A + AMP + 2 H(+). It functions in the pathway cofactor biosynthesis; thiamine diphosphate biosynthesis. Functionally, catalyzes the ATP-dependent transfer of a sulfur to tRNA to produce 4-thiouridine in position 8 of tRNAs, which functions as a near-UV photosensor. Also catalyzes the transfer of sulfur to the sulfur carrier protein ThiS, forming ThiS-thiocarboxylate. This is a step in the synthesis of thiazole, in the thiamine biosynthesis pathway. The sulfur is donated as persulfide by IscS. The polypeptide is Probable tRNA sulfurtransferase (Streptococcus equi subsp. equi (strain 4047)).